The sequence spans 637 residues: Probable potassium transport system protein Kup (637 aa).

12 helical membrane-spanning segments follow: residues 24-44, 64-84, 113-133, 151-171, 182-202, 225-245, 261-281, 290-310, 351-371, 381-401, 409-429, and 433-453; these read LAIAAIGVVFGDIGTSPLYAL, VISLLFWAIILVVGIKYLLFV, AGALMALGIFGACMFYGDAVI, PHLSHLVLPITIVILIALFWI, LFGPIMVVWFIVIAALGVYHI, LLQAYVVLGSVVLVLTGAEAL, AYGLVMPSLVLNYFGQGALLI, PFFLLAPEWGLLPLVVLSTVA, IYVPVVNWLLLFVILCIVIGF, YGIAVTATMVITTVLACVVMV, LLVGAIIAVFLAIDLGFFGAN, and VAQGGWLPLGIGALLFFLLMT.

It belongs to the HAK/KUP transporter (TC 2.A.72) family.

It is found in the cell inner membrane. The catalysed reaction is K(+)(in) + H(+)(in) = K(+)(out) + H(+)(out). Functionally, transport of potassium into the cell. Likely operates as a K(+):H(+) symporter. The polypeptide is Probable potassium transport system protein Kup (Burkholderia ambifaria (strain ATCC BAA-244 / DSM 16087 / CCUG 44356 / LMG 19182 / AMMD) (Burkholderia cepacia (strain AMMD))).